Consider the following 151-residue polypeptide: Ribonuclease H (151 aa).

The 143-residue stretch at 1–143 (MEEYVIYTDG…VDRVARKEAA (143 aa)) folds into the RNase H type-1 domain. Residues Asp-9, Glu-48, Asp-71, and Asp-135 each coordinate Mg(2+).

The protein belongs to the RNase H family. Monomer. The cofactor is Mg(2+).

It localises to the cytoplasm. The enzyme catalyses Endonucleolytic cleavage to 5'-phosphomonoester.. Functionally, endonuclease that specifically degrades the RNA of RNA-DNA hybrids. This Neorickettsia sennetsu (strain ATCC VR-367 / Miyayama) (Ehrlichia sennetsu) protein is Ribonuclease H.